The primary structure comprises 1705 residues: Protein TIC 214 (1705 aa).

The next 5 helical transmembrane spans lie at 18-38, 67-87, 127-147, 175-195, and 218-238; these read IINSVVVVGLYYGFLTTFSIG, FITGQLIMFISIYYAPLHLAL, LSIQCVFLNNLIFQLLNHFIL, VGWIIGHILFMKWVGLLLVWI, and SMSMAGIFSIFLLVTCVHYLG.

It belongs to the TIC214 family. In terms of assembly, part of the Tic complex.

It localises to the plastid. It is found in the chloroplast inner membrane. Functionally, involved in protein precursor import into chloroplasts. May be part of an intermediate translocation complex acting as a protein-conducting channel at the inner envelope. In Helianthus annuus (Common sunflower), this protein is Protein TIC 214.